The chain runs to 492 residues: Transmembrane protease serine 2 (492 aa).

The Cytoplasmic portion of the chain corresponds to 1-84 (MALNSGSPPA…TVCTSKTKKA (84 aa)). A helical; Signal-anchor for type II membrane protein membrane pass occupies residues 85-105 (LCITLTLGTFLVGAALAAGLL). Residues 106 to 492 (WKFMGSKCSN…WIYRQMRADG (387 aa)) are Extracellular-facing. 9 disulfide bridges follow: C113–C126, C120–C139, C133–C148, C172–C231, C185–C241, C244–C365, C281–C297, C410–C426, and C437–C465. In terms of domain architecture, LDL-receptor class A spans 118–148 (IECDSSGTCINPSNWCDGVSHCPGGEDENRC). Residues N131, D134, V136, D144, and E145 each contribute to the Ca(2+) site. The SRCR domain maps to 149 to 242 (VRLYGPNFIL…SKAVVSLRCI (94 aa)). N-linked (GlcNAc...) asparagine glycans are attached at residues N213 and N249. Positions 256-492 (IVGGESALPG…WIYRQMRADG (237 aa)) constitute a Peptidase S1 domain. Active-site charge relay system residues include H296 and D345. Residues 340–470 (KTKNNDIALM…WGSGCAKAYR (131 aa)) are HKU1-CoV S protein-binding. S441 (charge relay system) is an active-site residue.

The protein belongs to the peptidase S1 family. In terms of assembly, the catalytically active form interacts with ACE2. Proteolytically processed; by an autocatalytic mechanism. Autocleavage induces active conformation. In terms of tissue distribution, expressed in several tissues that comprise large populations of epithelial cells with the highest level of transcripts measured in the prostate gland. Expressed in type II pneumocytes in the lung (at protein level). Expressed strongly in small intestine. Also expressed in colon, stomach and salivary gland. Coexpressed with ACE2 within lung type II pneumocytes, ileal absorptive enterocytes, intestinal epithelial cells, cornea, gallbladder and nasal goblet secretory cells.

It localises to the cell membrane. The protein localises to the secreted. The enzyme catalyses The enzyme cleaves angiotensin-converting enzyme 2 (EC 3.4.17.23) and cleaves influenzea A and B virus and coronavirus spike glycoproteins at arginine residues.. Functionally, plasma membrane-anchored serine protease that cleaves at arginine residues. Participates in proteolytic cascades of relevance for the normal physiologic function of the prostate. Androgen-induced TMPRSS2 activates several substrates that include pro-hepatocyte growth factor/HGF, the protease activated receptor-2/F2RL1 or matriptase/ST14 leading to extracellular matrix disruption and metastasis of prostate cancer cells. In addition, activates trigeminal neurons and contribute to both spontaneous pain and mechanical allodynia. In terms of biological role, (Microbial infection) Facilitates human coronaviruses SARS-CoV and SARS-CoV-2 infections via two independent mechanisms, proteolytic cleavage of ACE2 receptor which promotes viral uptake, and cleavage of coronavirus spike glycoproteins which activates the glycoprotein for host cell entry. The cleavage of SARS-COV2 spike glycoprotein occurs between the S2 and S2' site. Upon SARS-CoV-2 infection, increases syncytia formation by accelerating the fusion process. Proteolytically cleaves and activates the spike glycoproteins of human coronavirus 229E (HCoV-229E) and human coronavirus EMC (HCoV-EMC) and the fusion glycoproteins F0 of Sendai virus (SeV), human metapneumovirus (HMPV), human parainfluenza 1, 2, 3, 4a and 4b viruses (HPIV). Essential for spread and pathogenesis of influenza A virus (strains H1N1, H3N2 and H7N9); involved in proteolytic cleavage and activation of hemagglutinin (HA) protein which is essential for viral infectivity. Its function is as follows. (Microbial infection) Receptor for human coronavirus HKU1-CoV, acts synergistically with disialoside glycans to facilitate the entry of the virus. After binding to cell-surface disialoside glycans, the viral S protein interacts with the inactive form of TMPRSS2 and inhibits its protease activity. The sequence is that of Transmembrane protease serine 2 from Homo sapiens (Human).